Consider the following 189-residue polypeptide: UPF0301 protein CF0373 (189 aa).

This sequence belongs to the UPF0301 (AlgH) family.

This is UPF0301 protein CF0373 from Chlamydia felis (strain Fe/C-56) (Chlamydophila felis).